Reading from the N-terminus, the 306-residue chain is Shugoshin (306 aa).

Positions 28 to 75 form a coiled coil; it reads NFKSTNESLIKKNLQLKQQLSQCTKALEKLRNENIALREQNQELIDAT. Disordered regions lie at residues 122–196 and 223–306; these read PEPS…GRRS and IAPS…DTFF. A compositionally biased stretch (basic and acidic residues) spans 133–161; the sequence is PKMECNLEKLDESPVRNFPRSDYEEENKS. Residues 167–181 show a composition bias toward polar residues; sequence NGPSSSSSMTQNLEN. Residues 230–241 are compositionally biased toward pro residues; the sequence is GGPPKKAPPRKA.

The protein belongs to the shugoshin family.

The protein localises to the nucleus. Its subcellular location is the chromosome. The protein resides in the centromere. In terms of biological role, plays a central role in chromosome cohesion during cell division by preventing premature dissociation of cohesin complex from centromeres after prophase, when most of cohesin complex dissociates from chromosomes arms. The protein is Shugoshin (sgo-1) of Caenorhabditis briggsae.